We begin with the raw amino-acid sequence, 509 residues long: Scavenger receptor class B member 1 (509 aa).

The Cytoplasmic portion of the chain corresponds to 1–11 (MGSRSRARQVA). A helical membrane pass occupies residues 12–32 (AALGFVGLLLAALGAVMIVMV). At 33–439 (PSIIKQQVLK…FYTQLVLMPK (407 aa)) the chain is on the extracellular side. N-linked (GlcNAc...) asparagine glycosylation is found at Asn-102, Asn-108, Asn-173, Asn-212, Asn-255, Asn-310, Asn-330, and Asn-383. Cysteines 251 and 384 form a disulfide. Residues 440 to 460 (VLHYAQYVLLALGCVLLFIPI) traverse the membrane as a helical segment. Residues 461-509 (VYQIRSQEKCYLFWSSSKKGSKDKEAIQAYSESLMTPAPKGTVLQEARL) are Cytoplasmic-facing.

This sequence belongs to the CD36 family. In terms of assembly, the C-terminal region binds to PDZK1. In terms of processing, N-glycosylated. The six cysteines of the extracellular domain are all involved in intramolecular disulfide bonds.

It localises to the cell membrane. It is found in the membrane. The protein localises to the caveola. In terms of biological role, receptor for different ligands such as phospholipids, cholesterol ester, lipoproteins, phosphatidylserine and apoptotic cells. Receptor for HDL, mediating selective uptake of cholesteryl ether and HDL-dependent cholesterol efflux. Also facilitates the flux of free and esterified cholesterol between the cell surface and apoB-containing lipoproteins and modified lipoproteins, although less efficiently than HDL. May be involved in the phagocytosis of apoptotic cells, via its phosphatidylserine binding activity. The chain is Scavenger receptor class B member 1 (SCARB1) from Sus scrofa (Pig).